The chain runs to 732 residues: Elongation factor 2 (732 aa).

One can recognise a tr-type G domain in the interval 19-260; the sequence is ERIRNIGIAA…MVVRHLPSPI (242 aa). GTP contacts are provided by residues 28-35, 94-98, and 148-151; these read AHIDHGKT, DTPGH, and NKVD. Position 597 is a diphthamide (H597).

This sequence belongs to the TRAFAC class translation factor GTPase superfamily. Classic translation factor GTPase family. EF-G/EF-2 subfamily.

It is found in the cytoplasm. Its function is as follows. Catalyzes the GTP-dependent ribosomal translocation step during translation elongation. During this step, the ribosome changes from the pre-translocational (PRE) to the post-translocational (POST) state as the newly formed A-site-bound peptidyl-tRNA and P-site-bound deacylated tRNA move to the P and E sites, respectively. Catalyzes the coordinated movement of the two tRNA molecules, the mRNA and conformational changes in the ribosome. The protein is Elongation factor 2 (fusA) of Pyrococcus furiosus (strain ATCC 43587 / DSM 3638 / JCM 8422 / Vc1).